Reading from the N-terminus, the 135-residue chain is Ribonuclease VapC5 (135 aa).

One can recognise a PINc domain in the interval 9–130 (VLDTSVFIAT…FAALDGAASV (122 aa)). Mg(2+) contacts are provided by D11 and D100.

Belongs to the PINc/VapC protein family. In terms of assembly, forms a complex with VapB5. Mg(2+) is required as a cofactor.

Its subcellular location is the secreted. Probable toxic component of a type II toxin-antitoxin (TA) system. The cognate antitoxin is VapB5. Has limited RNase activity on substrates; activity is seen with a VapC5-VapB5 complex. This is Ribonuclease VapC5 from Mycobacterium tuberculosis (strain ATCC 25618 / H37Rv).